The primary structure comprises 132 residues: Phosphoribosyl-AMP cyclohydrolase (132 aa).

Position 89 (Asp-89) interacts with Mg(2+). Position 90 (Cys-90) interacts with Zn(2+). 2 residues coordinate Mg(2+): Asp-91 and Asp-93. Zn(2+)-binding residues include Cys-106 and Cys-113.

Belongs to the PRA-CH family. In terms of assembly, homodimer. Mg(2+) is required as a cofactor. Requires Zn(2+) as cofactor.

The protein resides in the cytoplasm. It carries out the reaction 1-(5-phospho-beta-D-ribosyl)-5'-AMP + H2O = 1-(5-phospho-beta-D-ribosyl)-5-[(5-phospho-beta-D-ribosylamino)methylideneamino]imidazole-4-carboxamide. Its pathway is amino-acid biosynthesis; L-histidine biosynthesis; L-histidine from 5-phospho-alpha-D-ribose 1-diphosphate: step 3/9. Functionally, catalyzes the hydrolysis of the adenine ring of phosphoribosyl-AMP. The protein is Phosphoribosyl-AMP cyclohydrolase of Renibacterium salmoninarum (strain ATCC 33209 / DSM 20767 / JCM 11484 / NBRC 15589 / NCIMB 2235).